The sequence spans 312 residues: Ribonuclease HIII (312 aa).

In terms of domain architecture, RNase H type-2 spans 95–312 (MSILGSDEVG…TEKAFRLLKK (218 aa)). A divalent metal cation is bound by residues Asp-101, Glu-102, and Asp-206.

The protein belongs to the RNase HII family. RnhC subfamily. It depends on Mn(2+) as a cofactor. Requires Mg(2+) as cofactor.

It localises to the cytoplasm. It catalyses the reaction Endonucleolytic cleavage to 5'-phosphomonoester.. Endonuclease that specifically degrades the RNA of RNA-DNA hybrids. This chain is Ribonuclease HIII, found in Bacillus mycoides (strain KBAB4) (Bacillus weihenstephanensis).